We begin with the raw amino-acid sequence, 423 residues long: Imidazolonepropionase (423 aa).

The Fe(3+) site is built by His78 and His80. Zn(2+) is bound by residues His78 and His80. 4-imidazolone-5-propanoate is bound by residues Arg87, Tyr150, and His183. Residue Tyr150 coordinates N-formimidoyl-L-glutamate. His247 contacts Fe(3+). His247 is a binding site for Zn(2+). A 4-imidazolone-5-propanoate-binding site is contributed by Glu250. Asp322 lines the Fe(3+) pocket. Asp322 is a binding site for Zn(2+). Positions 324 and 326 each coordinate N-formimidoyl-L-glutamate. Position 327 (Ser327) interacts with 4-imidazolone-5-propanoate.

This sequence belongs to the metallo-dependent hydrolases superfamily. HutI family. Zn(2+) is required as a cofactor. It depends on Fe(3+) as a cofactor.

The protein resides in the cytoplasm. The catalysed reaction is 4-imidazolone-5-propanoate + H2O = N-formimidoyl-L-glutamate. It functions in the pathway amino-acid degradation; L-histidine degradation into L-glutamate; N-formimidoyl-L-glutamate from L-histidine: step 3/3. In terms of biological role, catalyzes the hydrolytic cleavage of the carbon-nitrogen bond in imidazolone-5-propanoate to yield N-formimidoyl-L-glutamate. It is the third step in the universal histidine degradation pathway. The sequence is that of Imidazolonepropionase from Bacillus mycoides (strain KBAB4) (Bacillus weihenstephanensis).